The chain runs to 271 residues: Putative phosphoenolpyruvate synthase regulatory protein (271 aa).

An ADP-binding site is contributed by 152 to 159; it reads GVSRSGKT.

Belongs to the pyruvate, phosphate/water dikinase regulatory protein family. PSRP subfamily.

The enzyme catalyses [pyruvate, water dikinase] + ADP = [pyruvate, water dikinase]-phosphate + AMP + H(+). It carries out the reaction [pyruvate, water dikinase]-phosphate + phosphate + H(+) = [pyruvate, water dikinase] + diphosphate. Its function is as follows. Bifunctional serine/threonine kinase and phosphorylase involved in the regulation of the phosphoenolpyruvate synthase (PEPS) by catalyzing its phosphorylation/dephosphorylation. The chain is Putative phosphoenolpyruvate synthase regulatory protein from Dichelobacter nodosus (strain VCS1703A).